The primary structure comprises 96 residues: Molybdopterin synthase sulfur carrier subunit (96 aa).

1-thioglycine; alternate is present on glycine 96. Glycine 96 is subject to Glycyl adenylate; alternate.

This sequence belongs to the MoaD family. MOCS2A subfamily. Heterotetramer; composed of 2 small (MOCS2A) and 2 large (MOCS2B) subunits. Post-translationally, C-terminal thiocarboxylation occurs in 2 steps, it is first acyl-adenylated (-COAMP) via the hesA/moeB/thiF part of UBA4, then thiocarboxylated (-COSH) via the rhodanese domain of UBA4.

Its subcellular location is the cytoplasm. It participates in cofactor biosynthesis; molybdopterin biosynthesis. In terms of biological role, acts as a sulfur carrier required for molybdopterin biosynthesis. Component of the molybdopterin synthase complex that catalyzes the conversion of precursor Z into molybdopterin by mediating the incorporation of 2 sulfur atoms into precursor Z to generate a dithiolene group. In the complex, serves as sulfur donor by being thiocarboxylated (-COSH) at its C-terminus by UBA4. After interaction with MOCS2B, the sulfur is then transferred to precursor Z to form molybdopterin. This chain is Molybdopterin synthase sulfur carrier subunit, found in Phaeosphaeria nodorum (strain SN15 / ATCC MYA-4574 / FGSC 10173) (Glume blotch fungus).